The sequence spans 247 residues: Ice-binding protein (247 aa).

Positions 1 to 19 (MTFSILSIFVFGLISSSVA) are cleaved as a signal peptide. Asparagine 219 carries N-linked (GlcNAc...) asparagine glycosylation.

Belongs to the ice-binding protein family.

It is found in the secreted. Its function is as follows. Binds ice crystals and most probably inhibits their growth in order to prevent cell damage from extracellular ice. This chain is Ice-binding protein, found in Flammulina populicola (Enokitake mushroom).